The chain runs to 138 residues: Transcription antitermination protein NusB (138 aa).

Belongs to the NusB family.

In terms of biological role, involved in transcription antitermination. Required for transcription of ribosomal RNA (rRNA) genes. Binds specifically to the boxA antiterminator sequence of the ribosomal RNA (rrn) operons. This is Transcription antitermination protein NusB from Helicobacter pylori (strain ATCC 700392 / 26695) (Campylobacter pylori).